We begin with the raw amino-acid sequence, 284 residues long: L-ribulose-5-phosphate 3-epimerase UlaE (284 aa).

Belongs to the L-ribulose-5-phosphate 3-epimerase family.

The catalysed reaction is L-ribulose 5-phosphate = L-xylulose 5-phosphate. The protein operates within cofactor degradation; L-ascorbate degradation; D-xylulose 5-phosphate from L-ascorbate: step 3/4. In terms of biological role, catalyzes the isomerization of L-xylulose-5-phosphate to L-ribulose-5-phosphate. Is involved in the anaerobic L-ascorbate utilization. The sequence is that of L-ribulose-5-phosphate 3-epimerase UlaE from Escherichia coli (strain K12 / MC4100 / BW2952).